The chain runs to 178 residues: ATP-dependent protease subunit HslV (178 aa).

T7 is an active-site residue. Na(+) is bound by residues G162, C165, and T168.

It belongs to the peptidase T1B family. HslV subfamily. As to quaternary structure, a double ring-shaped homohexamer of HslV is capped on each side by a ring-shaped HslU homohexamer. The assembly of the HslU/HslV complex is dependent on binding of ATP.

The protein resides in the cytoplasm. It catalyses the reaction ATP-dependent cleavage of peptide bonds with broad specificity.. Its activity is regulated as follows. Allosterically activated by HslU binding. Protease subunit of a proteasome-like degradation complex believed to be a general protein degrading machinery. The chain is ATP-dependent protease subunit HslV from Cupriavidus metallidurans (strain ATCC 43123 / DSM 2839 / NBRC 102507 / CH34) (Ralstonia metallidurans).